The primary structure comprises 382 residues: Galactokinase (382 aa).

Residue 34–37 (EHTD) coordinates substrate. 124 to 130 (GAGLSSS) provides a ligand contact to ATP. Residues Ser-130 and Glu-162 each coordinate Mg(2+). Catalysis depends on Asp-174, which acts as the Proton acceptor. Tyr-223 contacts substrate.

Belongs to the GHMP kinase family. GalK subfamily.

It is found in the cytoplasm. The enzyme catalyses alpha-D-galactose + ATP = alpha-D-galactose 1-phosphate + ADP + H(+). It participates in carbohydrate metabolism; galactose metabolism. Functionally, catalyzes the transfer of the gamma-phosphate of ATP to D-galactose to form alpha-D-galactose-1-phosphate (Gal-1-P). This Shigella boydii serotype 18 (strain CDC 3083-94 / BS512) protein is Galactokinase.